We begin with the raw amino-acid sequence, 446 residues long: Phosphoglucosamine mutase (446 aa).

The Phosphoserine intermediate role is filled by serine 100. The Mg(2+) site is built by serine 100, aspartate 239, aspartate 241, and aspartate 243. Phosphoserine is present on serine 100.

The protein belongs to the phosphohexose mutase family. Mg(2+) is required as a cofactor. Activated by phosphorylation.

The enzyme catalyses alpha-D-glucosamine 1-phosphate = D-glucosamine 6-phosphate. Catalyzes the conversion of glucosamine-6-phosphate to glucosamine-1-phosphate. This Oceanobacillus iheyensis (strain DSM 14371 / CIP 107618 / JCM 11309 / KCTC 3954 / HTE831) protein is Phosphoglucosamine mutase.